The primary structure comprises 259 residues: Imidazole glycerol phosphate synthase subunit HisF (259 aa).

Catalysis depends on residues D11 and D130.

Belongs to the HisA/HisF family. In terms of assembly, heterodimer of HisH and HisF.

Its subcellular location is the cytoplasm. It catalyses the reaction 5-[(5-phospho-1-deoxy-D-ribulos-1-ylimino)methylamino]-1-(5-phospho-beta-D-ribosyl)imidazole-4-carboxamide + L-glutamine = D-erythro-1-(imidazol-4-yl)glycerol 3-phosphate + 5-amino-1-(5-phospho-beta-D-ribosyl)imidazole-4-carboxamide + L-glutamate + H(+). It participates in amino-acid biosynthesis; L-histidine biosynthesis; L-histidine from 5-phospho-alpha-D-ribose 1-diphosphate: step 5/9. IGPS catalyzes the conversion of PRFAR and glutamine to IGP, AICAR and glutamate. The HisF subunit catalyzes the cyclization activity that produces IGP and AICAR from PRFAR using the ammonia provided by the HisH subunit. The sequence is that of Imidazole glycerol phosphate synthase subunit HisF from Lactococcus lactis subsp. cremoris (strain SK11).